The primary structure comprises 543 residues: Oxalate--CoA ligase (543 aa).

ATP is bound at residue 196-207 (HTSGTTSTPKTV). The FACS motif lies at 410–458 (ENYFRTGDQGYFDPEGFLVLTGRIKELINRGGEKISPIELDGIMLSHPK). Residues 541 to 543 (SKL) carry the C-terminal peroxisome targeting signal (PTS1) motif.

The protein belongs to the ATP-dependent AMP-binding enzyme family. As to quaternary structure, interacts with PEX5.

It is found in the peroxisome matrix. Its subcellular location is the peroxisome membrane. It catalyses the reaction oxalate + ATP + CoA = oxalyl-CoA + AMP + diphosphate. Functionally, catalyzes the first step in a degradation pathway of oxalate to CO(2) to protect the cell against the harmful effects of oxalate derived from endogenous processes or an environmental sources. The sequence is that of Oxalate--CoA ligase from Saccharomyces cerevisiae (strain ATCC 204508 / S288c) (Baker's yeast).